The following is a 525-amino-acid chain: Cytochrome P450 4V2 (525 aa).

The chain crosses the membrane as a helical span at residues Leu13–Leu33. 2 residues coordinate heme: Glu329 and Cys467.

Belongs to the cytochrome P450 family. Heme serves as cofactor. Broadly expressed. Detected in heart, brain, placenta, lung, liver, skeletal muscle, kidney, pancreas, retina, retinal pigment epithelium (RPE) and lymphocytes.

The protein localises to the endoplasmic reticulum membrane. It catalyses the reaction dodecanoate + reduced [NADPH--hemoprotein reductase] + O2 = 12-hydroxydodecanoate + oxidized [NADPH--hemoprotein reductase] + H2O + H(+). It carries out the reaction tetradecanoate + reduced [NADPH--hemoprotein reductase] + O2 = 14-hydroxytetradecanoate + oxidized [NADPH--hemoprotein reductase] + H2O + H(+). The catalysed reaction is hexadecanoate + reduced [NADPH--hemoprotein reductase] + O2 = 16-hydroxyhexadecanoate + oxidized [NADPH--hemoprotein reductase] + H2O + H(+). The enzyme catalyses (5Z,8Z,11Z,14Z,17Z)-eicosapentaenoate + reduced [NADPH--hemoprotein reductase] + O2 = 20-hydroxy-(5Z,8Z,11Z,14Z,17Z)-eicosapentaenoate + oxidized [NADPH--hemoprotein reductase] + H2O + H(+). It catalyses the reaction (4Z,7Z,10Z,13Z,16Z,19Z)-docosahexaenoate + reduced [NADPH--hemoprotein reductase] + O2 = 22-hydroxy-(4Z,7Z,10Z,13Z,16Z,19Z)-docosahexaenoate + oxidized [NADPH--hemoprotein reductase] + H2O + H(+). It functions in the pathway lipid metabolism; fatty acid metabolism. Inhibited by N-hydroxy-N'-(4-n-butyl-2-methylphenyl formamidine)(HET0016) with an IC(50) of 38 nM. In terms of biological role, a cytochrome P450 monooxygenase involved in fatty acid metabolism in the eye. Catalyzes the omega-hydroxylation of polyunsaturated fatty acids (PUFAs) docosahexaenoate (DHA) and its precursor eicosapentaenoate (EPA), and may contribute to the homeostasis of these retinal PUFAs. Omega hydroxylates saturated fatty acids such as laurate, myristate and palmitate, the catalytic efficiency decreasing in the following order: myristate &gt; laurate &gt; palmitate (C14&gt;C12&gt;C16). Mechanistically, uses molecular oxygen inserting one oxygen atom into a substrate, and reducing the second into a water molecule, with two electrons provided by NADPH via cytochrome P450 reductase (CPR; NADPH-ferrihemoprotein reductase). The chain is Cytochrome P450 4V2 (CYP4V2) from Homo sapiens (Human).